Consider the following 235-residue polypeptide: Large ribosomal subunit protein uL1 (235 aa).

This sequence belongs to the universal ribosomal protein uL1 family. In terms of assembly, part of the 50S ribosomal subunit.

Functionally, binds directly to 23S rRNA. The L1 stalk is quite mobile in the ribosome, and is involved in E site tRNA release. Its function is as follows. Protein L1 is also a translational repressor protein, it controls the translation of the L11 operon by binding to its mRNA. The chain is Large ribosomal subunit protein uL1 from Renibacterium salmoninarum (strain ATCC 33209 / DSM 20767 / JCM 11484 / NBRC 15589 / NCIMB 2235).